The chain runs to 749 residues: 5-methyltetrahydropteroyltriglutamate--homocysteine methyltransferase (749 aa).

5-methyltetrahydropteroyltri-L-glutamate-binding positions include 15–18 (RELK) and Lys-114. L-homocysteine is bound by residues 425–427 (IGS) and Glu-478. Residues 425–427 (IGS) and Glu-478 contribute to the L-methionine site. A 5-methyltetrahydropteroyltri-L-glutamate-binding site is contributed by Trp-555. Asp-593 is an L-homocysteine binding site. Asp-593 contributes to the L-methionine binding site. 5-methyltetrahydropteroyltri-L-glutamate is bound at residue Glu-599. 3 residues coordinate Zn(2+): His-636, Cys-638, and Glu-660. The active-site Proton donor is His-689. Residue Cys-721 coordinates Zn(2+).

It belongs to the vitamin-B12 independent methionine synthase family. It depends on Zn(2+) as a cofactor.

The catalysed reaction is 5-methyltetrahydropteroyltri-L-glutamate + L-homocysteine = tetrahydropteroyltri-L-glutamate + L-methionine. Its pathway is amino-acid biosynthesis; L-methionine biosynthesis via de novo pathway; L-methionine from L-homocysteine (MetE route): step 1/1. Functionally, catalyzes the transfer of a methyl group from 5-methyltetrahydrofolate to homocysteine resulting in methionine formation. The protein is 5-methyltetrahydropteroyltriglutamate--homocysteine methyltransferase of Streptococcus pneumoniae serotype 2 (strain D39 / NCTC 7466).